Reading from the N-terminus, the 24-residue chain is Cryptonin (24 aa).

In terms of biological role, antimicrobial peptide, active against the Gram-negative bacterium E.coli K12-594 (MIC=3.12 ug/ml), the Gram-positive bacteria B.subtilis KCTC 3086 (MIC=3.12 ug/ml), S.aureus KCTC 1928 (MIC=25 ug/ml) and M.luteus KCTC 3063 (MIC=1.56 ug/ml), the antibiotic resistant bacteria methicillin-resistant S.aureus (MRSA) (MIC=25 ug/ml) and vancomycin-resistant Enterococci (VRE) (MIC=25 ug/ml), and the fungi C.albicans KCTC 7965 (MIC=50 ug/ml) and C.tropicalis KCTC 1925 (MIC=3.12 ug/ml). Has very low hemolytic activity on rat erythrocytes. This chain is Cryptonin, found in Cryptotympana dubia (Korean horse cicada).